A 514-amino-acid chain; its full sequence is MAYRNRNLASQTQRPLAPTAPRRRPVVTPQISDRSRLRGFANVGSGPCHPLTDRAANQHLQTYEANVKGSFELIVPFLKRISALQHDQDFVSKCQSLARSELGFDLPSHLLEQAWVRALDMRALFAWCVFQSHQHVSDHFFQEDPLQGGEGSIQAKHFQSFLVDCGFHLLDVSPCADGRLAHTIAYALRIPFSSVRRRSHAGALFDVEKTVNRWIKTEHRRYREGVPNSADSPTRYLKVVTYHFSSLDPSHQGCAAHGSDDALAASAGQQRLLDFRESVENSFCCGASVDLLLIGLDTDTDAIRVHVPAADGSIVLDEWLSAEDLYHETLSLTSDEAMQHIAERVEAIAPKKPDEGMVAFIVKLIANNFSQIDYVKQSHAGPYPDAGHAERFIGVGIGFKEVHLRNLTYFAHLDTVEVGAPDLDVGVKIFKGLNVSRDLPIPVVVRFDYSGQVPGARDRAVTDCYRVNQAIAERYSELFDQGLLHTFLTIRDRDKKDTSEVVGSSLEPVHQEAH.

A disordered region spans residues 1–27 (MAYRNRNLASQTQRPLAPTAPRRRPVV). Cys175 lines the Zn(2+) pocket. Asp177 functions as the Proton acceptor in the catalytic mechanism. Residues His243 and Cys254 each coordinate Zn(2+).

Belongs to the beta-class carbonic anhydrase family. CsoSCA subfamily. In terms of assembly, homodimer. It depends on Zn(2+) as a cofactor.

Its subcellular location is the carboxysome. The enzyme catalyses hydrogencarbonate + H(+) = CO2 + H2O. Its function is as follows. Reversible hydration of carbon dioxide. Essential for photosynthetic carbon dioxide fixation, supplies CO(2) to RuBisCO (ribulose bisphosphate carboxylase, cbbL-cbbS) in the carboxysome. The chain is Carboxysome shell carbonic anhydrase from Prochlorococcus marinus (strain MIT 9313).